Here is a 448-residue protein sequence, read N- to C-terminus: N-succinylarginine dihydrolase (448 aa).

Residues 19 to 28, Asn110, and 137 to 138 each bind substrate; these read GGLSYGNVAS and HR. Glu174 is a catalytic residue. Substrate is bound at residue Arg214. Residue His250 is part of the active site. Asp252 and Asn365 together coordinate substrate. Cys371 (nucleophile) is an active-site residue.

The protein belongs to the succinylarginine dihydrolase family. In terms of assembly, homodimer.

The catalysed reaction is N(2)-succinyl-L-arginine + 2 H2O + 2 H(+) = N(2)-succinyl-L-ornithine + 2 NH4(+) + CO2. Its pathway is amino-acid degradation; L-arginine degradation via AST pathway; L-glutamate and succinate from L-arginine: step 2/5. In terms of biological role, catalyzes the hydrolysis of N(2)-succinylarginine into N(2)-succinylornithine, ammonia and CO(2). The polypeptide is N-succinylarginine dihydrolase (Pseudomonas syringae pv. tomato (strain ATCC BAA-871 / DC3000)).